Reading from the N-terminus, the 340-residue chain is Heat-inducible transcription repressor HrcA (340 aa).

The protein belongs to the HrcA family.

Negative regulator of class I heat shock genes (grpE-dnaK-dnaJ and groELS operons). Prevents heat-shock induction of these operons. In Phytoplasma australiense, this protein is Heat-inducible transcription repressor HrcA.